A 143-amino-acid chain; its full sequence is Protein STIG1 (143 aa).

Residues 1-23 (MDFIILLIAILALSSTPITIISG) form the signal peptide. A sufficient for PI(4)P binding region spans residues 76-87 (RTCCFNYFCVDL). The segment at 80–83 (FNYF) is sufficient for binding to the extracellular domain of PRK2. The tract at residues 88–115 (FTNRFNCGSCGLVCIVGTRCCGGICVDI) is sufficient for PI(3)P binding.

The protein belongs to the STIG1 family. As to quaternary structure, interacts with PRK1 and PRK2 (via extracellular domain). In terms of tissue distribution, expressed in the stigma and the upper section of the style.

It localises to the secreted. The protein localises to the extracellular space. The protein resides in the apoplast. In terms of biological role, promotes pollen tube growth. A C-terminal peptide is cleaved from the propeptide in the stigmatic exudate and represent the major form of STIG1. Binds phosphoinositol lipids. The binding of external phosphatidylinositol 3-phosphate (PI(3)P) and PRK2 by STIG1 induces a rapid intracellular reactive oxygen species elevation. The polypeptide is Protein STIG1 (Solanum lycopersicum (Tomato)).